The chain runs to 250 residues: Ribosomal RNA small subunit methyltransferase J (250 aa).

S-adenosyl-L-methionine contacts are provided by residues 101-102, 117-118, 153-154, and Asp-171; these read RD, ER, and SS.

It belongs to the methyltransferase superfamily. RsmJ family.

Its subcellular location is the cytoplasm. It carries out the reaction guanosine(1516) in 16S rRNA + S-adenosyl-L-methionine = N(2)-methylguanosine(1516) in 16S rRNA + S-adenosyl-L-homocysteine + H(+). Specifically methylates the guanosine in position 1516 of 16S rRNA. This is Ribosomal RNA small subunit methyltransferase J from Shigella boydii serotype 18 (strain CDC 3083-94 / BS512).